The chain runs to 373 residues: WAT1-related protein At4g30420 (373 aa).

10 helical membrane-spanning segments follow: residues 2–22 (AMTM…ATLV), 29–49 (VFIL…LYLS), 55–75 (IAIS…SLIG), 94–114 (MGSA…FLAG), 125–145 (GLAK…MTLL), 173–193 (WLIG…WLIL), 205–225 (LSLS…VTFF), 244–264 (CLYA…WAIA), 270–290 (FSAL…ALFF), and 294–314 (IYTG…TVLW). 2 consecutive EamA domains span residues 9-135 (CYAG…TILC) and 186-313 (CWSF…YTVL).

This sequence belongs to the drug/metabolite transporter (DMT) superfamily. Plant drug/metabolite exporter (P-DME) (TC 2.A.7.4) family.

The protein resides in the membrane. In Arabidopsis thaliana (Mouse-ear cress), this protein is WAT1-related protein At4g30420.